Consider the following 150-residue polypeptide: Endoribonuclease YbeY (150 aa).

His-112, His-116, and His-122 together coordinate Zn(2+).

The protein belongs to the endoribonuclease YbeY family. It depends on Zn(2+) as a cofactor.

The protein localises to the cytoplasm. Its function is as follows. Single strand-specific metallo-endoribonuclease involved in late-stage 70S ribosome quality control and in maturation of the 3' terminus of the 16S rRNA. The protein is Endoribonuclease YbeY of Geobacter sulfurreducens (strain ATCC 51573 / DSM 12127 / PCA).